The sequence spans 372 residues: Probable O-methyltransferase 2 (372 aa).

S-adenosyl-L-methionine contacts are provided by glycine 216, aspartate 259, and lysine 273. The active-site Proton acceptor is histidine 277.

The protein belongs to the class I-like SAM-binding methyltransferase superfamily. Cation-independent O-methyltransferase family. COMT subfamily. Homodimer. In terms of tissue distribution, expressed predominantly in root hairs.

Its function is as follows. O-methyltransferase of unknown substrate specificity. Not active on resorcinol, orcinol, guaiacol, eugenol, ferulic acid, p-coumaric acid, catechol, caffeic acid or monomethyl ethers of resorcinol or orcinol. This Sorghum bicolor (Sorghum) protein is Probable O-methyltransferase 2 (OMT2).